A 177-amino-acid chain; its full sequence is Large ribosomal subunit protein uL6 (177 aa).

It belongs to the universal ribosomal protein uL6 family. As to quaternary structure, part of the 50S ribosomal subunit.

Functionally, this protein binds to the 23S rRNA, and is important in its secondary structure. It is located near the subunit interface in the base of the L7/L12 stalk, and near the tRNA binding site of the peptidyltransferase center. In Sphingopyxis alaskensis (strain DSM 13593 / LMG 18877 / RB2256) (Sphingomonas alaskensis), this protein is Large ribosomal subunit protein uL6.